Here is a 325-residue protein sequence, read N- to C-terminus: CRISPR-associated endonuclease Cas1 2 (325 aa).

Residues Glu145, His212, and Asp225 each contribute to the Mn(2+) site. The segment at Glu283 to Gly325 is disordered. Positions Asp315–Gly325 are enriched in acidic residues.

Belongs to the CRISPR-associated endonuclease Cas1 family. As to quaternary structure, homodimer, forms a heterotetramer with a Cas2 homodimer. The cofactor is Mg(2+). It depends on Mn(2+) as a cofactor.

Functionally, CRISPR (clustered regularly interspaced short palindromic repeat), is an adaptive immune system that provides protection against mobile genetic elements (viruses, transposable elements and conjugative plasmids). CRISPR clusters contain spacers, sequences complementary to antecedent mobile elements, and target invading nucleic acids. CRISPR clusters are transcribed and processed into CRISPR RNA (crRNA). Acts as a dsDNA endonuclease. Involved in the integration of spacer DNA into the CRISPR cassette. The sequence is that of CRISPR-associated endonuclease Cas1 2 from Thermus thermophilus (strain ATCC 27634 / DSM 579 / HB8).